The primary structure comprises 308 residues: Olfactory receptor OR9H1 (308 aa).

Residues 1–26 (MVNFTHVSEFVLLGFQGGPGMQAMLF) lie on the Extracellular side of the membrane. A helical membrane pass occupies residues 27 to 47 (LIFLILYGIAVVGNLGMIVII). Residues 48–58 (WVDAHLHTPMY) lie on the Cytoplasmic side of the membrane. Residues 59–81 (AFLQSLSLLDICYSSTIAPRALA) form a helical membrane-spanning segment. At 82 to 95 (NSMQEDHTISFGGC) the chain is on the extracellular side. The cysteines at positions 95 and 177 are disulfide-linked. The chain crosses the membrane as a helical span at residues 96 to 116 (AAQFFFLSLFGITEAFLLAAM). The Cytoplasmic portion of the chain corresponds to 117–137 (AYDRFIAICNPLLYSVSMSHQ). The helical transmembrane segment at 138–158 (VCVLLISGSYLWGVVNAIAQT) threads the bilayer. Over 159–203 (TMTFRLPFCGSNEINDFFCDVPPLLSLSCSDTFINQLVLLGLCGS) the chain is Extracellular. The chain crosses the membrane as a helical span at residues 204-224 (IIVSTFLIVLVSYIYIISTIL). The Cytoplasmic portion of the chain corresponds to 225–245 (RIPTMQGCQKAFSTCASHLTG). A helical transmembrane segment spans residues 246–266 (VCLFFGTVFFMYAQPSAIFFM). Residues 267–269 (EQS) lie on the Extracellular side of the membrane. The chain crosses the membrane as a helical span at residues 270-290 (KIVSIFYTMVIPMLNPLIYSL). Over 291-308 (RNKEVKQALRRSMQKLSL) the chain is Cytoplasmic.

It belongs to the G-protein coupled receptor 1 family.

Its subcellular location is the cell membrane. Odorant receptor. The polypeptide is Olfactory receptor OR9H1 (Homo sapiens (Human)).